Consider the following 505-residue polypeptide: RNA-splicing ligase RtcB homolog (505 aa).

The Mn(2+) site is built by D119, C122, H227, and H259. N226–E230 contributes to the GMP binding site. Position 300 is a phosphoserine (S300). A Mn(2+)-binding site is contributed by H353. GMP contacts are provided by residues H353–N354, G402–M405, S409, and H428–G431. H428 (GMP-histidine intermediate) is an active-site residue. K496 participates in a covalent cross-link: Glycyl lysine isopeptide (Lys-Gly) (interchain with G-Cter in SUMO2). Residue K504 participates in GMP binding.

This sequence belongs to the RtcB family. Catalytic component of the tRNA-splicing ligase complex. Mn(2+) is required as a cofactor.

It is found in the nucleus. The protein localises to the cytoplasm. It catalyses the reaction a 3'-end 3'-phospho-ribonucleotide-RNA + a 5'-end dephospho-ribonucleoside-RNA + GTP = a ribonucleotidyl-ribonucleotide-RNA + GMP + diphosphate. The enzyme catalyses a 3'-end 2',3'-cyclophospho-ribonucleotide-RNA + a 5'-end dephospho-ribonucleoside-RNA + GTP + H2O = a ribonucleotidyl-ribonucleotide-RNA + GMP + diphosphate + H(+). Its function is as follows. Catalytic subunit of the tRNA-splicing ligase complex that acts by directly joining spliced tRNA halves to mature-sized tRNAs by incorporating the precursor-derived splice junction phosphate into the mature tRNA as a canonical 3',5'-phosphodiester. May act as an RNA ligase with broad substrate specificity, and may function toward other RNAs. This Bos taurus (Bovine) protein is RNA-splicing ligase RtcB homolog.